A 328-amino-acid chain; its full sequence is DNA-directed RNA polymerase subunit alpha (328 aa).

Residues 1-234 (MQNSTTEFLK…DQMSIFADLQ (234 aa)) form an alpha N-terminal domain (alpha-NTD) region. Residues 248-328 (IDPVLLRPVD…AWPPVGLEKP (81 aa)) form an alpha C-terminal domain (alpha-CTD) region.

This sequence belongs to the RNA polymerase alpha chain family. In terms of assembly, homodimer. The RNAP catalytic core consists of 2 alpha, 1 beta, 1 beta' and 1 omega subunit. When a sigma factor is associated with the core the holoenzyme is formed, which can initiate transcription.

It carries out the reaction RNA(n) + a ribonucleoside 5'-triphosphate = RNA(n+1) + diphosphate. Its function is as follows. DNA-dependent RNA polymerase catalyzes the transcription of DNA into RNA using the four ribonucleoside triphosphates as substrates. This Neisseria meningitidis serogroup A / serotype 4A (strain DSM 15465 / Z2491) protein is DNA-directed RNA polymerase subunit alpha.